We begin with the raw amino-acid sequence, 395 residues long: Aurora kinase A (395 aa).

Residues Met-1–Thr-114 form a disordered region. Polar residues-rich tracts occupy residues Gln-29–Gln-60 and Arg-84–Asn-99. Ser-40 and Ser-50 each carry phosphoserine. Positions Asp-100–Thr-114 are enriched in basic and acidic residues. The Protein kinase domain occupies Phe-124 to Ile-374. Residues Lys-134, Lys-153, and Leu-201–Ala-204 each bind ATP. Residue Asp-247 is the Proton acceptor of the active site. A Glycyl lysine isopeptide (Lys-Gly) (interchain with G-Cter in SUMO2) cross-link involves residue Lys-249. ATP-binding positions include Glu-251–Asn-252 and Asp-265. An activation segment region spans residues His-271–Leu-284. Residues Thr-278 and Thr-279 each carry the phosphothreonine modification. Ser-333 carries the phosphoserine; by PKA and PAK modification. Polar residues predominate over residues Ala-376–His-385. Residues Ala-376–Ser-395 are disordered. Positions Thr-386–Ser-395 are enriched in basic and acidic residues.

It belongs to the protein kinase superfamily. Ser/Thr protein kinase family. Aurora subfamily. As to quaternary structure, part of a complex composed of NEDD9, AURKA and CTTN; within the complex NEDD9 acts as a scaffold protein and is required for complex formation. Identified in a complex with AUNIP and NIN. Interacts with CPEB1, JTB, TACC1, TPX2, PPP2CA, as well as with the protein phosphatase type 1 (PP1) isoforms PPP1CA, PPP1CB and PPP1CC. Also interacts with its substrates ARHGEF2, BORA, KIF2A, PARD3, and p53/TP53. Interaction with BORA promotes phosphorylation of PLK1. Interacts with GADD45A, competing with its oligomerization. Interacts with FBXL7 and CIMAP3. Interacts (via C-terminus) with AUNIP (via C-terminus). Interacts with SIRT2. Interacts with FRY; this interaction facilitates AURKA-mediated PLK1 phosphorylation. Interacts with MYCN; interaction is phospho-independent and triggers AURKA activation; AURKA competes with FBXW7 for binding to unphosphorylated MYCN but not for binding to phosphorylated MYCN. Interacts with HNRNPU. Interacts with AAAS. Interacts with KLHL18 and CUL3. Interacts with FOXP1. Interacts with HDAC6; AURKA-mediated phosphorylation of HDAC6 promotes deacetylation of alpha-tubulin. In terms of processing, activated by phosphorylation at Thr-279; this brings about a change in the conformation of the activation segment. Phosphorylation at Thr-279 varies during the cell cycle and is highest during M phase. Autophosphorylated at Thr-279 upon TPX2 binding. Thr-279 can be phosphorylated by several kinases, including PAK and PKA. Protein phosphatase type 1 (PP1) binds AURKA and inhibits its activity by dephosphorylating Thr-279 during mitosis. Phosphorylation at Ser-333 decreases the kinase activity. PPP2CA controls degradation by dephosphorylating Ser-52 at the end of mitosis. Post-translationally, ubiquitinated by the anaphase-promoting complex (APC), leading to its degradation by the proteasome. Ubiquitinated by CHFR, leading to its degradation by the proteasome. Ubiquitinated by the E3 ubiquitin-protein ligase complex SCF(FBXL7) during mitosis, leading to its degradation by the proteasome. As to expression, detected in embryonic neurons in dorsal root ganglia and brain cortex (at protein level). Highly expressed in testis, in about one third of the seminiferous tubules. Expression is restricted to specific spermatocytes nearing completion of prophase, with levels falling off on transition to elongated spermatids. Highly expressed in the ovary, expression in the oocyte starts around the transition to large growing follicle. Abundant expression is seen in the proliferating granulosa and thecal cells of the growing follicle, and in the young corpus luteum. Very weakly expressed in spleen and intestine.

The protein resides in the cytoplasm. It is found in the cytoskeleton. It localises to the microtubule organizing center. Its subcellular location is the centrosome. The protein localises to the spindle pole. The protein resides in the centriole. It is found in the cell projection. It localises to the neuron projection. Its subcellular location is the cilium. The protein localises to the cilium basal body. The protein resides in the basolateral cell membrane. The catalysed reaction is L-seryl-[protein] + ATP = O-phospho-L-seryl-[protein] + ADP + H(+). It catalyses the reaction L-threonyl-[protein] + ATP = O-phospho-L-threonyl-[protein] + ADP + H(+). With respect to regulation, activation of CDK1, appears to be an upstream event of AURKA activation. Phosphatase inhibitor-2 (PPP1R2) and TPX2 act also as activators. Inactivated by the G2 checkpoint. Inhibited by GADD45A and p53/TP53, and through dephosphorylation by protein phosphatase type 1 (PP1). MLN8054 is also a potent and selective inhibitor. Activated during the early phase of cilia disassembly in the presence of CIMAP3. Inhibited by the small molecule inhibitor VX-680. Mitotic serine/threonine kinase that contributes to the regulation of cell cycle progression. Associates with the centrosome and the spindle microtubules during mitosis and plays a critical role in various mitotic events including the establishment of mitotic spindle, centrosome duplication, centrosome separation as well as maturation, chromosomal alignment, spindle assembly checkpoint, and cytokinesis. Required for normal spindle positioning during mitosis and for the localization of NUMA1 and DCTN1 to the cell cortex during metaphase. Required for initial activation of CDK1 at centrosomes. Phosphorylates numerous target proteins, including ARHGEF2, BORA, BRCA1, CDC25B, DLGP5, HDAC6, KIF2A, LATS2, NDEL1, PARD3, PPP1R2, PLK1, RASSF1, TACC3, p53/TP53 and TPX2. Phosphorylates MCRS1 which is required for MCRS1-mediated kinetochore fiber assembly and mitotic progression. Regulates KIF2A tubulin depolymerase activity. Required for normal axon formation. Plays a role in microtubule remodeling during neurite extension. Important for microtubule formation and/or stabilization. Also acts as a key regulatory component of the p53/TP53 pathway, and particularly the checkpoint-response pathways critical for oncogenic transformation of cells, by phosphorylating and destabilizing p53/TP53. Phosphorylates its own inhibitors, the protein phosphatase type 1 (PP1) isoforms, to inhibit their activity. Inhibits cilia outgrowth. Required for cilia disassembly via phosphorylation of HDAC6 and subsequent deacetylation of alpha-tubulin. Regulates protein levels of the anti-apoptosis protein BIRC5 by suppressing the expression of the SCF(FBXL7) E3 ubiquitin-protein ligase substrate adapter FBXL7 through the phosphorylation of the transcription factor FOXP1. In Mus musculus (Mouse), this protein is Aurora kinase A (Aurka).